The sequence spans 97 residues: MSLLDAHIPQLIASHTAFAAKAGLMRHTIGQAEQQAMSAQAFHQGESAAAFQGAHARFVAAAAKVNTLLDIAQANLGEAAGTYVAADAAAASSYTGF.

The protein belongs to the WXG100 family. CFP-10 subfamily. In terms of assembly, forms a tight complex with EsxR. Exists in heterodimeric and heterotetrameric forms.

It localises to the secreted. The chain is ESAT-6-like protein EsxS from Mycobacterium tuberculosis (strain ATCC 25618 / H37Rv).